The sequence spans 209 residues: Uracil phosphoribosyltransferase (209 aa).

Residues Arg79, Arg104, and 131-139 (DPMLATGGS) contribute to the 5-phospho-alpha-D-ribose 1-diphosphate site. Residues Ile194 and 199–201 (GDA) each bind uracil. Position 200 (Asp200) interacts with 5-phospho-alpha-D-ribose 1-diphosphate.

It belongs to the UPRTase family. Mg(2+) is required as a cofactor.

The catalysed reaction is UMP + diphosphate = 5-phospho-alpha-D-ribose 1-diphosphate + uracil. It participates in pyrimidine metabolism; UMP biosynthesis via salvage pathway; UMP from uracil: step 1/1. With respect to regulation, allosterically activated by GTP. Its function is as follows. Catalyzes the conversion of uracil and 5-phospho-alpha-D-ribose 1-diphosphate (PRPP) to UMP and diphosphate. This is Uracil phosphoribosyltransferase from Natranaerobius thermophilus (strain ATCC BAA-1301 / DSM 18059 / JW/NM-WN-LF).